The primary structure comprises 154 residues: MAVKKILLLNGPNLNLLGTREPHIYGYDTLASIESSLTTYLSSLTPSVTLLSFQTNWEGALIDRIHEARTDGTDAIVINPGAFTHYSIALRDALTGVDIPFVEVHISNVHKREEFRHKSFLSDKAEAVICGLGVYGYRAAVEWCVGYLKEKPKA.

Tyrosine 25 acts as the Proton acceptor in catalysis. Substrate contacts are provided by asparagine 79, histidine 85, and aspartate 92. The active-site Proton donor is histidine 105. Substrate contacts are provided by residues 106 to 107 (IS) and arginine 116.

This sequence belongs to the type-II 3-dehydroquinase family. In terms of assembly, homododecamer. Adopts a ring-like structure, composed of an arrangement of two hexameric rings stacked on top of one another.

The catalysed reaction is 3-dehydroquinate = 3-dehydroshikimate + H2O. It functions in the pathway aromatic compound metabolism; 3,4-dihydroxybenzoate biosynthesis; 3,4-dihydroxybenzoate from 3-dehydroquinate: step 1/2. Functionally, is involved in the catabolism of quinate. Allows the utilization of quinate as carbon source via the beta-ketoadipate pathway. In Botryotinia fuckeliana (strain B05.10) (Noble rot fungus), this protein is Catabolic 3-dehydroquinase.